The chain runs to 210 residues: Transmembrane protein 61 (210 aa).

Transmembrane regions (helical) follow at residues 18–38 (YCMT…FAWW) and 69–89 (VSFV…LWSV). The tract at residues 140-172 (VAEGPPTPPAYPTEEALEPSGSRDALLSTQPAW) is disordered.

It localises to the membrane. This chain is Transmembrane protein 61 (TMEM61), found in Homo sapiens (Human).